The primary structure comprises 597 residues: MAQAWAFLLPVLVFGSYMTSLFFPTYISGPLCGGDGGGRSLFLCAQAPKDQDPSPAVSTMYKTAFHFQPAKNWMNDPSGPMYFNGFYHEFYQYNPNGPIFGDIVWGHSVSTDLVNWIGLEPALVRDTPSDIDGCWTGSVTILPGGKPVIIYTGGDKDQHQAQNIAFPKNRSDPYLREWIKAANNPVLRPDEPGMNSIEFRDPTTGWIGPDGLWRMAVGGELNGYSAALLYKSEDFLNWTKVDHPLYSHNGSNMWECPDFFAVLPGNNAGLDLSAAIPQGAKHALKMSVDSVDKYMIGVYDLQRDAFVPDNVVDDRRLWLRIDYGTFYASKSFFDSNKNRRIIWGWSRETDSPSDDLEKGWAGLHTIPRTIWLADDGKQLLQWPVEEIESLRTNEISHQGIELNKGDLFEIKEVDAFQADVEIGFELASIDDADPFDPSWLLDPEKHCGEAGASVPGGIGPFGLVILASDNMDEHTEVYFRVYKSEEKYMVLMCSDLRRSSLRPDLEKPAYGGFFEFDLEKERKISLRTLIDRSAVESFGGGGRVCITSRVYPAVLADVGRAHIYAFNNGSATVRVPQLSAWTMRKAQVNVEKGWSAI.

The signal sequence occupies residues 1 to 15 (MAQAWAFLLPVLVFG). Residue D76 is part of the active site. 3 N-linked (GlcNAc...) asparagine glycosylation sites follow: N169, N237, and N249. A disulfide bridge connects residues C447 and C493. A glycan (N-linked (GlcNAc...) asparagine) is linked at N568.

This sequence belongs to the glycosyl hydrolase 32 family.

The catalysed reaction is Hydrolysis of terminal, non-reducing (2-&gt;1)-linked beta-D-fructofuranose residues in fructans.. With respect to regulation, inhibited by sucrose. Functionally, hydrolyzes inulin-type beta-(2,1)-fructans. May play a role as a beta-(2,1)-trimmer during graminan biosynthesis. The polypeptide is Fructan 1-exohydrolase (Triticum urartu (Red wild einkorn)).